Consider the following 316-residue polypeptide: Tyrosine recombinase XerD (316 aa).

The 94-residue stretch at 4–97 (AALQTQLQGY…AVRGLHRFAV (94 aa)) folds into the Core-binding (CB) domain. A Tyr recombinase domain is found at 118–309 (RLPKSLTVDE…TVQALREVWA (192 aa)). Residues R162, K186, H261, R264, and H287 contribute to the active site. The active-site O-(3'-phospho-DNA)-tyrosine intermediate is the Y296.

This sequence belongs to the 'phage' integrase family. XerD subfamily. Forms a cyclic heterotetrameric complex composed of two molecules of XerC and two molecules of XerD.

The protein localises to the cytoplasm. In terms of biological role, site-specific tyrosine recombinase, which acts by catalyzing the cutting and rejoining of the recombining DNA molecules. The XerC-XerD complex is essential to convert dimers of the bacterial chromosome into monomers to permit their segregation at cell division. It also contributes to the segregational stability of plasmids. The sequence is that of Tyrosine recombinase XerD from Mycobacterium leprae (strain TN).